The chain runs to 211 residues: tRNA (guanine-N(7)-)-methyltransferase (211 aa).

Residues glutamate 44, aspartate 69, aspartate 96, and aspartate 118 each coordinate S-adenosyl-L-methionine. Aspartate 118 is a catalytic residue. Position 122 (lysine 122) interacts with substrate. Residues 124 to 129 (RHEKRR) are interaction with RNA. Residues aspartate 154 and 191-194 (TEYE) each bind substrate.

This sequence belongs to the class I-like SAM-binding methyltransferase superfamily. TrmB family.

It carries out the reaction guanosine(46) in tRNA + S-adenosyl-L-methionine = N(7)-methylguanosine(46) in tRNA + S-adenosyl-L-homocysteine. It participates in tRNA modification; N(7)-methylguanine-tRNA biosynthesis. Catalyzes the formation of N(7)-methylguanine at position 46 (m7G46) in tRNA. This Streptococcus pneumoniae (strain CGSP14) protein is tRNA (guanine-N(7)-)-methyltransferase.